A 356-amino-acid polypeptide reads, in one-letter code: Dynein regulatory complex protein 10 (356 aa).

Residues 126-167 (SNREFFEEVRDREERAVAEQEQLKQKLKLQRVELQKAAGTIQ) adopt a coiled-coil conformation. Residues 173 to 209 (ARGEVSEVQSSTQQSRAAIEGSARAQSEADKSSFQSD) are disordered. Low complexity predominate over residues 178–187 (SEVQSSTQQS). Positions 197–287 (AQSEADKSSF…LRQLQEYNSG (91 aa)) form a coiled coil. One can recognise an IQ domain in the interval 319-348 (QNHAARVIQSYWRGFKKAREAAKKKAKKLE).

Belongs to the DRC10 family. Component of the nexin-dynein regulatory complex (N-DRC).

It is found in the cytoplasm. The protein resides in the cytoskeleton. The protein localises to the flagellum axoneme. In terms of biological role, component of the nexin-dynein regulatory complex (N-DRC), a key regulator of ciliary/flagellar motility which maintains the alignment and integrity of the distal axoneme and regulates microtubule sliding in motile axonemes. The chain is Dynein regulatory complex protein 10 from Chlamydomonas reinhardtii (Chlamydomonas smithii).